Here is a 395-residue protein sequence, read N- to C-terminus: F-box only protein 7 (395 aa).

The F-box domain maps to 19–70 (NHDWSKLCPDILRKIIESLSSLDFYRAKIVCSDWYSVWKTCVKRPLRPWRII).

This is F-box only protein 7 (FBX7) from Arabidopsis thaliana (Mouse-ear cress).